Here is a 178-residue protein sequence, read N- to C-terminus: ATP synthase subunit delta (178 aa).

The protein belongs to the ATPase delta chain family. F-type ATPases have 2 components, F(1) - the catalytic core - and F(0) - the membrane proton channel. F(1) has five subunits: alpha(3), beta(3), gamma(1), delta(1), epsilon(1). F(0) has three main subunits: a(1), b(2) and c(10-14). The alpha and beta chains form an alternating ring which encloses part of the gamma chain. F(1) is attached to F(0) by a central stalk formed by the gamma and epsilon chains, while a peripheral stalk is formed by the delta and b chains.

It is found in the cell inner membrane. In terms of biological role, f(1)F(0) ATP synthase produces ATP from ADP in the presence of a proton or sodium gradient. F-type ATPases consist of two structural domains, F(1) containing the extramembraneous catalytic core and F(0) containing the membrane proton channel, linked together by a central stalk and a peripheral stalk. During catalysis, ATP synthesis in the catalytic domain of F(1) is coupled via a rotary mechanism of the central stalk subunits to proton translocation. Its function is as follows. This protein is part of the stalk that links CF(0) to CF(1). It either transmits conformational changes from CF(0) to CF(1) or is implicated in proton conduction. This chain is ATP synthase subunit delta, found in Acinetobacter baumannii (strain SDF).